The sequence spans 557 residues: Carboxypeptidase Y homolog A (557 aa).

A signal peptide spans 1–17 (MRVLPAAMLVGAATAAV). The propeptide occupies 18 to 138 (PPFQQVLGGN…KLEAYDLRVK (121 aa)). Cystine bridges form between Cys-193–Cys-433, Cys-327–Cys-341, Cys-351–Cys-374, Cys-358–Cys-367, and Cys-396–Cys-403. Asn-224 is a glycosylation site (N-linked (GlcNAc...) asparagine). Residue Ser-280 is part of the active site. The active site involves Asp-472. An N-linked (GlcNAc...) asparagine glycan is attached at Asn-523. The active site involves His-534.

It belongs to the peptidase S10 family.

The protein localises to the vacuole. It carries out the reaction Release of a C-terminal amino acid with broad specificity.. Vacuolar carboxypeptidase involved in degradation of small peptides. Digests preferentially peptides containing an aliphatic or hydrophobic residue in P1' position, as well as methionine, leucine or phenylalanine in P1 position of ester substrate. This Aspergillus niger (strain ATCC MYA-4892 / CBS 513.88 / FGSC A1513) protein is Carboxypeptidase Y homolog A (cpyA).